The sequence spans 75 residues: Iota-conotoxin-like R11.3 (75 aa).

The first 19 residues, 1–19, serve as a signal peptide directing secretion; the sequence is MKLCLTFLLVLMILASVTG. Residues 20 to 34 constitute a propeptide that is removed on maturation; that stretch reads EKLSEQTLRRAARKN. 4 disulfides stabilise this stretch: C39/C53, C46/C58, C52/C63, and C57/C70.

The protein belongs to the conotoxin I1 superfamily. Expressed by the venom duct.

It is found in the secreted. Its function is as follows. Iota-conotoxins bind to voltage-gated sodium channels (Nav) and act as agonists by shifting the voltage-dependence of activation to more hyperpolarized levels. Produces general excitatory symptoms. The protein is Iota-conotoxin-like R11.3 of Conus radiatus (Rayed cone).